We begin with the raw amino-acid sequence, 452 residues long: UPF0210 protein Csac_1314 (452 aa).

It belongs to the UPF0210 family. As to quaternary structure, homodimer.

This chain is UPF0210 protein Csac_1314, found in Caldicellulosiruptor saccharolyticus (strain ATCC 43494 / DSM 8903 / Tp8T 6331).